We begin with the raw amino-acid sequence, 321 residues long: Transaldolase (321 aa).

K132 serves as the catalytic Schiff-base intermediate with substrate.

The protein belongs to the transaldolase family. Type 1 subfamily. As to quaternary structure, homodimer.

The protein localises to the cytoplasm. The catalysed reaction is D-sedoheptulose 7-phosphate + D-glyceraldehyde 3-phosphate = D-erythrose 4-phosphate + beta-D-fructose 6-phosphate. It functions in the pathway carbohydrate degradation; pentose phosphate pathway; D-glyceraldehyde 3-phosphate and beta-D-fructose 6-phosphate from D-ribose 5-phosphate and D-xylulose 5-phosphate (non-oxidative stage): step 2/3. Its function is as follows. Transaldolase is important for the balance of metabolites in the pentose-phosphate pathway. The sequence is that of Transaldolase from Rhizobium etli (strain ATCC 51251 / DSM 11541 / JCM 21823 / NBRC 15573 / CFN 42).